A 486-amino-acid chain; its full sequence is Replication factor C large subunit (486 aa).

ATP is bound at residue 46–53; sequence GPPGSGKT. The disordered stretch occupies residues 419–486; that stretch reads VKKETPKKTE…KKQATLDSFF (68 aa). Basic and acidic residues-rich tracts occupy residues 420–432 and 442–480; these read KKET…KPKE and RISE…KKQA.

The protein belongs to the activator 1 small subunits family. RfcL subfamily. Heteromultimer composed of small subunits (RfcS) and large subunits (RfcL).

Functionally, part of the RFC clamp loader complex which loads the PCNA sliding clamp onto DNA. The chain is Replication factor C large subunit from Methanococcus maripaludis (strain DSM 14266 / JCM 13030 / NBRC 101832 / S2 / LL).